An 84-amino-acid chain; its full sequence is Exodeoxyribonuclease 7 small subunit (84 aa).

This sequence belongs to the XseB family. Heterooligomer composed of large and small subunits.

It localises to the cytoplasm. The catalysed reaction is Exonucleolytic cleavage in either 5'- to 3'- or 3'- to 5'-direction to yield nucleoside 5'-phosphates.. Its function is as follows. Bidirectionally degrades single-stranded DNA into large acid-insoluble oligonucleotides, which are then degraded further into small acid-soluble oligonucleotides. This chain is Exodeoxyribonuclease 7 small subunit, found in Bartonella bacilliformis (strain ATCC 35685 / KC583 / Herrer 020/F12,63).